The chain runs to 337 residues: Phenylalanine--tRNA ligase alpha subunit (337 aa).

Glu258 contacts Mg(2+).

It belongs to the class-II aminoacyl-tRNA synthetase family. Phe-tRNA synthetase alpha subunit type 1 subfamily. Tetramer of two alpha and two beta subunits. Mg(2+) is required as a cofactor.

Its subcellular location is the cytoplasm. It catalyses the reaction tRNA(Phe) + L-phenylalanine + ATP = L-phenylalanyl-tRNA(Phe) + AMP + diphosphate + H(+). This Paraburkholderia phytofirmans (strain DSM 17436 / LMG 22146 / PsJN) (Burkholderia phytofirmans) protein is Phenylalanine--tRNA ligase alpha subunit.